The sequence spans 102 residues: Small ribosomal subunit protein uS10 (102 aa).

The protein belongs to the universal ribosomal protein uS10 family. In terms of assembly, part of the 30S ribosomal subunit.

In terms of biological role, involved in the binding of tRNA to the ribosomes. The polypeptide is Small ribosomal subunit protein uS10 (Caulobacter sp. (strain K31)).